We begin with the raw amino-acid sequence, 408 residues long: Tripartite motif-containing protein 59 (408 aa).

The segment at 10-60 (CSICYSLFEDPRVLPCSHTFCRSCLEGVIQLSSNFSIWRPLRVPLKCPNCR) adopts an RING-type zinc-finger fold. Residues 92–134 (SDVATCSEHYRQPLNVYCLLDKKLVCGHCLTIGKHNGHPIDDL) form a B box-type zinc finger. Positions 97, 100, 120, and 126 each coordinate Zn(2+). A coiled-coil region spans residues 163 to 247 (LIEKLKEQKA…LNTSIQKEES (85 aa)). The helical transmembrane segment at 333-353 (ANPLSVTFIFTVIIAIAVLSF) threads the bilayer.

Belongs to the TRIM/RBCC family. Interacts with ECSIT.

The protein resides in the endoplasmic reticulum membrane. In terms of biological role, may serve as a multifunctional regulator for innate immune signaling pathways. The sequence is that of Tripartite motif-containing protein 59 (TRIM59) from Gallus gallus (Chicken).